Reading from the N-terminus, the 233-residue chain is Leucyl/phenylalanyl-tRNA--protein transferase (233 aa).

It belongs to the L/F-transferase family.

The protein localises to the cytoplasm. The catalysed reaction is N-terminal L-lysyl-[protein] + L-leucyl-tRNA(Leu) = N-terminal L-leucyl-L-lysyl-[protein] + tRNA(Leu) + H(+). It carries out the reaction N-terminal L-arginyl-[protein] + L-leucyl-tRNA(Leu) = N-terminal L-leucyl-L-arginyl-[protein] + tRNA(Leu) + H(+). The enzyme catalyses L-phenylalanyl-tRNA(Phe) + an N-terminal L-alpha-aminoacyl-[protein] = an N-terminal L-phenylalanyl-L-alpha-aminoacyl-[protein] + tRNA(Phe). Its function is as follows. Functions in the N-end rule pathway of protein degradation where it conjugates Leu, Phe and, less efficiently, Met from aminoacyl-tRNAs to the N-termini of proteins containing an N-terminal arginine or lysine. This Desulfatibacillum aliphaticivorans protein is Leucyl/phenylalanyl-tRNA--protein transferase.